A 522-amino-acid polypeptide reads, in one-letter code: Mediator of RNA polymerase II transcription subunit 1.2 (522 aa).

A coiled-coil region spans residues 13–40 (LLEQRKNQELNIEHIDEEMRLEQVRQAA).

This sequence belongs to the Mediator complex subunit 1 family. In terms of assembly, component of the Mediator complex.

It is found in the nucleus. Component of the Mediator complex, a coactivator involved in the regulated transcription of nearly all RNA polymerase II-dependent genes. Mediator functions as a bridge to convey information from gene-specific regulatory proteins to the basal RNA polymerase II transcription machinery. Mediator is recruited to promoters by direct interactions with regulatory proteins and serves as a scaffold for the assembly of a functional preinitiation complex with RNA polymerase II and the general transcription factors. In Caenorhabditis elegans, this protein is Mediator of RNA polymerase II transcription subunit 1.2 (mdt-1.2).